Reading from the N-terminus, the 447-residue chain is Protein mab-21-like 4 (447 aa).

The chain is Protein mab-21-like 4 from Homo sapiens (Human).